The following is a 375-amino-acid chain: Superinfection exclusion protein (375 aa).

Residues methionine 1–alanine 15 form the signal peptide.

It belongs to the serpin family. Orthopoxvirus OPG040 subfamily. In terms of assembly, interacts with OPG185/A56 protein.

It localises to the virion membrane. Its subcellular location is the host cell membrane. Its function is as follows. Negatively regulates superinfection and syncytium formation in infected host cells. Acts in concert with OPG185/A56 protein at the host cell membrane by interacting with and inhibiting the mature virion entry/fusion complex (EFC). This mechanism ensures that new virions released from the cell cannot enter already infected cells. The polypeptide is Superinfection exclusion protein (OPG040) (Cynomys gunnisoni (Gunnison's prairie dog)).